We begin with the raw amino-acid sequence, 92 residues long: Small ribosomal subunit protein uS19c (92 aa).

This sequence belongs to the universal ribosomal protein uS19 family.

The protein localises to the plastid. Its subcellular location is the chloroplast. Its function is as follows. Protein S19 forms a complex with S13 that binds strongly to the 16S ribosomal RNA. This Thalassiosira pseudonana (Marine diatom) protein is Small ribosomal subunit protein uS19c.